A 949-amino-acid chain; its full sequence is ATPase 1, plasma membrane-type (949 aa).

Serine 2 carries the post-translational modification N-acetylserine. The Cytoplasmic segment spans residues 2-61 (SGLEDIKNETVDLEKIPIEEVFQQLKCTREGLTTQEGEDRIVIFGPNKLEEKKESKILKF). A helical membrane pass occupies residues 62–81 (LGFMWNPLSWVMEAAALMAI). At 82 to 93 (ALANGDNRPPDW) the chain is on the extracellular side. A helical membrane pass occupies residues 94–114 (QDFVGIICLLVINSTISFIEE). At 115-243 (NNAGNAAAAL…GHFQKVLTSI (129 aa)) the chain is on the cytoplasmic side. Residues 244-264 (GNFCICSIAIGIAIEIVVMYP) traverse the membrane as a helical segment. At 265 to 273 (IQHRKYRDG) the chain is on the extracellular side. Residues 274 to 291 (IDNLLVLLIGGIPIAMPT) traverse the membrane as a helical segment. Over 292–643 (VLSVTMAIGS…TSRAIFQRMK (352 aa)) the chain is Cytoplasmic. The active-site 4-aspartylphosphate intermediate is aspartate 329. 2 residues coordinate Mg(2+): aspartate 588 and aspartate 592. Residues 644-665 (NYTIYAVSITIRIVFGFMLIAL) traverse the membrane as a helical segment. Topologically, residues 666 to 670 (IWEFD) are extracellular. The chain crosses the membrane as a helical span at residues 671–693 (FSAFMVLIIAILNDGTIMTISKD). Over 694–709 (RVKPSPTPDSWKLKEI) the chain is Cytoplasmic. A helical membrane pass occupies residues 710-730 (FATGIVLGGYQAIMSVIFFWA). Topologically, residues 731–751 (AHKTDFFSDKFGVRSIRDNND) are extracellular. Residues 752 to 772 (ELMGAVYLQVSIISQALIFVT) form a helical membrane-spanning segment. The Cytoplasmic segment spans residues 773-784 (RSRSWSFVERPG). Residues 785–805 (ALLMIAFVIAQLVATLIAVYA) traverse the membrane as a helical segment. Topologically, residues 806 to 813 (DWTFAKVK) are extracellular. The chain crosses the membrane as a helical span at residues 814 to 834 (GIGWGWAGVIWIYSIVTYFPQ). Topologically, residues 835–949 (DILKFAIRYI…IDTAGHHYTV (115 aa)) are cytoplasmic. Phosphothreonine is present on threonine 881. Serine 899 and serine 931 each carry phosphoserine. The segment at 947-949 (YTV) is interaction with 14-3-3 proteins. Threonine 948 is modified (phosphothreonine).

The protein belongs to the cation transport ATPase (P-type) (TC 3.A.3) family. Type IIIA subfamily. As to quaternary structure, binds to 14-3-3 proteins. The binding is induced by phosphorylation of Thr-948. Binding to 14-3-3 proteins activates the H(+)-ATPase. Interacts with PPI1; this interaction promotes ATPase activity. Interacts with PSY1R. Part of a functional complex containing PSKR1, BAK1, CNGC17, and AHA. Interacts with CNGC17 and PSKR1. Triggered by SAUR9 via the phosphorylation of the C-terminal autoinhibitory domain. Interacts with AHA2. Binds to CBC1 and CBC2. In terms of processing, phosphorylated, probably by PHOT1 and PHOT2, at C-terminal Thr-948 in guard cells in response to blue light to induce stomatal opening. In terms of tissue distribution, expressed in guard cells, mesophyll cells, leaves and roots.

The protein localises to the cell membrane. The catalysed reaction is ATP + H2O + H(+)(in) = ADP + phosphate + 2 H(+)(out). Its activity is regulated as follows. Phosphorylation on Thr residues is repressed by tyrphostin 9, sphingosine, GW5074 and BML-265. By contrast, the fungal phytotoxin fusicoccin (FC) promotes phosphorylation of Thr-948 independently to BHP, thus leading to large stomatal opening. Functionally, the plasma membrane H(+) ATPase of plants and fungi generates a proton gradient that drives the active transport of nutrients by H(+)-symport. The resulting external acidification and/or internal alkinization may mediate growth responses. Forms a functional cation-translocating unit with CNGC17 that is activated by PSKR1/BAK1 and possibly other BAK1/RLK complexes. Promotes stomatal opening in response to blue light. The chain is ATPase 1, plasma membrane-type from Arabidopsis thaliana (Mouse-ear cress).